A 220-amino-acid polypeptide reads, in one-letter code: Putative vesicle-associated membrane protein 726 (220 aa).

Over 1–196 the chain is Cytoplasmic; the sequence is MGQQSLIYSF…LWFENMKIKL (196 aa). The Longin domain occupies 10–114; sequence FVARGTVILA…SLNKEFGSKL (105 aa). The region spanning 130 to 190 is the v-SNARE coiled-coil homology domain; that stretch reads KLSKVKAQVT…TKMKRKLWFE (61 aa). A helical; Anchor for type IV membrane protein transmembrane segment spans residues 197–217; it reads IVFGIIVALILIIILSVCHGF. Over 218-220 the chain is Vesicular; sequence KCT.

It belongs to the synaptobrevin family. As to expression, expressed in flowers, leaves, stems and roots.

Its subcellular location is the cell membrane. It is found in the early endosome membrane. Its function is as follows. Involved in the targeting and/or fusion of transport vesicles to their target membrane. The chain is Putative vesicle-associated membrane protein 726 (VAMP726) from Arabidopsis thaliana (Mouse-ear cress).